A 98-amino-acid chain; its full sequence is MAGLINKIGDALHIGGGNKEGEHKKEEEHKKHVDEHKSGEHKEGIVDKIKDKIHGGEGKSHDGEGKSHDGEKKKKKDKKEKKHHDDGHHSSSSDSDSD.

The tract at residues 1–98 is disordered; it reads MAGLINKIGD…HSSSSDSDSD (98 aa). Over residues 19–72 the composition is skewed to basic and acidic residues; sequence KEGEHKKEEEHKKHVDEHKSGEHKEGIVDKIKDKIHGGEGKSHDGEGKSHDGEK. Basic residues predominate over residues 73 to 82; that stretch reads KKKKDKKEKK.

Belongs to the KS-type dehydrin family. Interacts with PXL1. In terms of processing, phosphorylated in vivo. Phosphorylated in vitro by PXL1. In terms of tissue distribution, highly expressed in the cambial zone of the stem vasculature (at protein level). Expressed in roots, rosettes leaves, stems, cauline leaves, flowers and siliques.

It is found in the cytoplasm. The protein resides in the nucleus. Its function is as follows. Intrinsically disordered and metal-binding protein. Binds to the divalent cations cobalt, nickel, copper and zinc, but not to magnesium, calcium, manganese or cadmium. Binding to metal ions decreases disordered state, decreases susceptibility to trypsin and promotes self-association. Can reduce the formation of reactive oxygen species (ROS) in a copper-ascorbate in vitro system. This chain is Dehydrin HIRD11, found in Arabidopsis thaliana (Mouse-ear cress).